The primary structure comprises 482 residues: MKFIIKLFPEITIKSQSVRLRFIKILTGNIRNVLKHYDETLAVVRHWDHIEVRAKDENQREAIRDALTRIPGIHHILEVEDHAYTDMHNIFEQALALYRERLEGKTFCVRVKRRGKHEFSSQDVERYVGGGLNQHIETARVNLTAPQITVHLEIEQDRLLLIKSRNEGIGGYPIGTQEDVLSLISGGFDSGVSSYMLMRRGCRVHYCFFNLGGAAHEIGVKQVAHYLWNRFGSSHRVRFVAIDFDPVVGEILEKVDDGQMGVVLKRMMVRAASKIAERYGVQALVTGEALGQVSSQTLTNLRLIDNASDTLILRPLISHDKEHIIKQARELGTEDFAKTMPEYCGVISKSPTVKAVKAKIEAEEGHFDFSILDRVVSEARNIDIREIAEQTSQEVVEVETVASFVPTDVLLDIRAPDEQDDKPLALDQVEIKSLPFYKLGTQFGDLDQSKTYLLYCERGVMSRLQALYLREQGFSNVKVYRP.

Residues 61 to 165 (EAIRDALTRI…QDRLLLIKSR (105 aa)) enclose the THUMP domain. Residues 183–184 (LI), Lys-265, Gly-287, and Gln-296 contribute to the ATP site. An intrachain disulfide couples Cys-344 to Cys-456. Residues 404-482 (FVPTDVLLDI…GFSNVKVYRP (79 aa)) enclose the Rhodanese domain. Cys-456 acts as the Cysteine persulfide intermediate in catalysis.

This sequence belongs to the ThiI family.

It is found in the cytoplasm. It carries out the reaction [ThiI sulfur-carrier protein]-S-sulfanyl-L-cysteine + a uridine in tRNA + 2 reduced [2Fe-2S]-[ferredoxin] + ATP + H(+) = [ThiI sulfur-carrier protein]-L-cysteine + a 4-thiouridine in tRNA + 2 oxidized [2Fe-2S]-[ferredoxin] + AMP + diphosphate. It catalyses the reaction [ThiS sulfur-carrier protein]-C-terminal Gly-Gly-AMP + S-sulfanyl-L-cysteinyl-[cysteine desulfurase] + AH2 = [ThiS sulfur-carrier protein]-C-terminal-Gly-aminoethanethioate + L-cysteinyl-[cysteine desulfurase] + A + AMP + 2 H(+). The protein operates within cofactor biosynthesis; thiamine diphosphate biosynthesis. In terms of biological role, catalyzes the ATP-dependent transfer of a sulfur to tRNA to produce 4-thiouridine in position 8 of tRNAs, which functions as a near-UV photosensor. Also catalyzes the transfer of sulfur to the sulfur carrier protein ThiS, forming ThiS-thiocarboxylate. This is a step in the synthesis of thiazole, in the thiamine biosynthesis pathway. The sulfur is donated as persulfide by IscS. The polypeptide is tRNA sulfurtransferase (Pectobacterium atrosepticum (strain SCRI 1043 / ATCC BAA-672) (Erwinia carotovora subsp. atroseptica)).